A 385-amino-acid chain; its full sequence is Period circadian protein (385 aa).

Disordered regions lie at residues 28–121, 169–189, and 322–351; these read TAPV…VPPV, GPGP…WEGE, and SPAS…TSQG. The span at 71–93 shows a compositional bias: low complexity; sequence SGNFTTGSNLHMSSVTNTSNAGT. Positions 94–115 are enriched in gly residues; sequence GTSGTGNSGDGGGGGAGDGPGS. Over residues 340–351 the composition is skewed to polar residues; sequence HPSSEQPSTSQG.

In terms of assembly, forms a heterodimer with timeless (TIM); the complex then translocates into the nucleus. Post-translationally, phosphorylated with a circadian rhythmicity, probably by the double-time protein (dbt). Phosphorylation could be implicated in the stability of per monomer and in the formation of heterodimer per-tim.

It localises to the nucleus. It is found in the cytoplasm. The protein localises to the perinuclear region. Functionally, essential for biological clock functions. Determines the period length of circadian and ultradian rhythms; an increase in PER dosage leads to shortened circadian rhythms and a decrease leads to lengthened circadian rhythms. Essential for the circadian rhythmicity of locomotor activity, eclosion behavior, and for the rhythmic component of the male courtship song that originates in the thoracic nervous system. The biological cycle depends on the rhythmic formation and nuclear localization of the TIM-PER complex. Light induces the degradation of TIM, which promotes elimination of PER. Nuclear activity of the heterodimer coordinatively regulates PER and TIM transcription through a negative feedback loop. Behaves as a negative element in circadian transcriptional loop. Does not appear to bind DNA, suggesting indirect transcriptional inhibition. This is Period circadian protein (per) from Drosophila nebulosa (Fruit fly).